The chain runs to 946 residues: Translation initiation factor IF-2 (946 aa).

Disordered regions lie at residues 58–250 and 301–324; these read AERK…AVVI and VSRD…KSLS. Low complexity-rich tracts occupy residues 102–165 and 174–185; these read EPPQ…QPAA and AQPSAPQPAAAQ. Residues 186 to 211 show a composition bias toward pro residues; the sequence is PRPPQPPMPSRPPPAGYRPAPPPGAR. A compositionally biased stretch (low complexity) spans 212–229; sequence PPMSAAPGAPAQPGAAAQ. In terms of domain architecture, tr-type G spans 445–614; that stretch reads IRPPVVTVMG…ALQSEVLELK (170 aa). The tract at residues 454–461 is G1; sequence GHVDHGKT. 454–461 contacts GTP; sequence GHVDHGKT. Positions 479–483 are G2; it reads GITQH. The G3 stretch occupies residues 500–503; the sequence is DTPG. GTP is bound by residues 500-504 and 554-557; these read DTPGH and NKVD. The interval 554–557 is G4; it reads NKVD. The segment at 590–592 is G5; it reads SAR.

This sequence belongs to the TRAFAC class translation factor GTPase superfamily. Classic translation factor GTPase family. IF-2 subfamily.

The protein localises to the cytoplasm. One of the essential components for the initiation of protein synthesis. Protects formylmethionyl-tRNA from spontaneous hydrolysis and promotes its binding to the 30S ribosomal subunits. Also involved in the hydrolysis of GTP during the formation of the 70S ribosomal complex. This Anaeromyxobacter sp. (strain K) protein is Translation initiation factor IF-2.